Consider the following 172-residue polypeptide: Ferritin-2 heavy chain (172 aa).

The region spanning 8-157 (QSFATECENA…DYLTETQRVG (150 aa)) is the Ferritin-like diiron domain. Fe cation contacts are provided by glutamate 25, glutamate 60, histidine 63, glutamate 105, and glutamine 139.

This sequence belongs to the ferritin family. Oligomer of 24 subunits. The functional molecule forms a roughly spherical shell with a diameter of 12 nm and contains a central cavity into which the insoluble mineral iron core is deposited.

It carries out the reaction 4 Fe(2+) + O2 + 4 H(+) = 4 Fe(3+) + 2 H2O. Stores iron in a soluble, non-toxic, readily available form. Important for iron homeostasis. Has ferroxidase activity. Iron is taken up in the ferrous form and deposited as ferric hydroxides after oxidation. The chain is Ferritin-2 heavy chain (SCM-2) from Schistosoma mansoni (Blood fluke).